Reading from the N-terminus, the 385-residue chain is 2-oxoglutarate-dependent dioxygenase AFUA_1G01000 (385 aa).

In terms of domain architecture, Fe2OG dioxygenase spans 203–327; that stretch reads PSDDFLRLLR…RYSVLVGTRP (125 aa). Fe cation is bound by residues histidine 230, aspartate 232, and histidine 304. Arginine 318 lines the 2-oxoglutarate pocket.

It belongs to the iron/ascorbate-dependent oxidoreductase family. It depends on Fe(2+) as a cofactor.

Functionally, 2-oxoglutarate-dependent dioxygenase; part of the gene cluster that mediates the biosynthesis of fumigermin that inhibits germination of spores of the inducing S.rapamycinicus, and thus helps the fungus to defend resources in the shared habitat against a bacterial competitor. The partially reducing polyketide synthase fngA alone is sufficient for the production of fumigermin. FgnA catalyzes the condensation of 3 malonyl-CoA units to an acetyl-CoA starter, and 3 methylations to yield fumigermin. It is remarkable that the five cluster genes including fgnA are conserved in distantly related fungi, supporting the assumption of a fumigermin cluster; it is thus possible that originally all five genes were functional, but that the genes encoding tailoring enzymes became inactive from mutations, similar to the case of the fgnA gene in strains A1163 and Af293. The protein is 2-oxoglutarate-dependent dioxygenase AFUA_1G01000 of Aspergillus fumigatus (strain ATCC MYA-4609 / CBS 101355 / FGSC A1100 / Af293) (Neosartorya fumigata).